We begin with the raw amino-acid sequence, 749 residues long: Probable serine/threonine-protein kinase fhkD (749 aa).

Positions 47–150 constitute an FHA domain; the sequence is IFFGRNPKRC…NGTFVKGCIL (104 aa). Residues 84–126 are compositionally biased toward low complexity; sequence NNNNNDGDNNNNNNNNNNNNNNNNNNNNNNNNNNNNNNNNNNN. The tract at residues 84–130 is disordered; it reads NNNNNDGDNNNNNNNNNNNNNNNNNNNNNNNNNNNNNNNNNNNTTKN. In terms of domain architecture, Protein kinase spans 199 to 472; that stretch reads YSIQGILGTG…TKGALSHDWF (274 aa). ATP contacts are provided by residues 205–213 and Lys-228; that span reads LGTGNFSVV. Asp-323 functions as the Proton acceptor in the catalytic mechanism. Disordered stretches follow at residues 512 to 620 and 640 to 749; these read NIPM…PAII and CTPT…LKGS. Over residues 516–561 the composition is skewed to low complexity; sequence TLNSTTTNTTSPNNNNNNNNNNNNKNNNKNIIKSLNSNSNNYNNNS. The segment covering 562 to 572 has biased composition (polar residues); it reads VLKKTSQSPKT. Composition is skewed to low complexity over residues 590 to 611 and 651 to 667; these read NNNN…NNNN and TNST…TSNS. Over residues 668–687 the composition is skewed to polar residues; that stretch reads VTMGTSSTSIPVSNSITMKS. The segment covering 696–707 has biased composition (basic and acidic residues); the sequence is DGDKKRKEKESS. The span at 708–739 shows a compositional bias: low complexity; that stretch reads SSENVNDVIVINSNNHNNNNNNNHNINNGISS.

Belongs to the protein kinase superfamily. CAMK Ser/Thr protein kinase family. CHK2 subfamily.

The enzyme catalyses L-seryl-[protein] + ATP = O-phospho-L-seryl-[protein] + ADP + H(+). The catalysed reaction is L-threonyl-[protein] + ATP = O-phospho-L-threonyl-[protein] + ADP + H(+). This chain is Probable serine/threonine-protein kinase fhkD (fhkD), found in Dictyostelium discoideum (Social amoeba).